We begin with the raw amino-acid sequence, 249 residues long: General transcription factor IIF subunit 2 (249 aa).

Alanine 2 carries the post-translational modification N-acetylalanine. Lysine 22, lysine 33, and lysine 137 each carry N6-acetyllysine. Residue serine 142 is modified to Phosphoserine. Residues glycine 227 and histidine 229 each coordinate DNA. Residue serine 248 is modified to Phosphoserine.

It belongs to the TFIIF beta subunit family. Heterodimer of an alpha and a beta subunit. Interacts with HTATSF1 and GPBP1. Interacts with URI1. Interacts with GTF2B (via N-terminus); this interaction is inhibited in presence of GTF2F1. Part of TBP-based Pol II pre-initiation complex (PIC), in which Pol II core assembles with general transcription factors and other specific initiation factors including GTF2E1, GTF2E2, GTF2F1, GTF2F2, TCEA1, ERCC2, ERCC3, GTF2H2, GTF2H3, GTF2H4, GTF2H5, GTF2A1, GTF2A2, GTF2B and TBP; this large multi-subunit PIC complex mediates DNA unwinding and targets Pol II core to the transcription start site where the first phosphodiester bond forms.

It localises to the nucleus. TFIIF is a general transcription initiation factor that binds to RNA polymerase II and helps to recruit it to the initiation complex in collaboration with TFIIB. It promotes transcription elongation. This Rattus norvegicus (Rat) protein is General transcription factor IIF subunit 2 (Gtf2f2).